The chain runs to 124 residues: MNLFIKIINKYLYKLIYNFIDFYQKIISPILPARCRYYPTCSNYGKQALAWHGVLNGSLLLLKRISRCHPLGGHGVDFVPLPLASYRYQYLSCNPVAHGQFHGFYVYRDNHGYVTRLNHMMKLT.

It belongs to the UPF0161 family.

It localises to the cell inner membrane. Could be involved in insertion of integral membrane proteins into the membrane. This chain is Putative membrane protein insertion efficiency factor, found in Psychrobacter cryohalolentis (strain ATCC BAA-1226 / DSM 17306 / VKM B-2378 / K5).